The chain runs to 1213 residues: DNA-directed RNA polymerase subunit beta' (1213 aa).

Cys-60, Cys-62, Cys-75, and Cys-78 together coordinate Zn(2+). Mg(2+)-binding residues include Asp-450, Asp-452, and Asp-454. Cys-819, Cys-893, Cys-900, and Cys-903 together coordinate Zn(2+).

It belongs to the RNA polymerase beta' chain family. In terms of assembly, the RNAP catalytic core consists of 2 alpha, 1 beta, 1 beta' and 1 omega subunit. When a sigma factor is associated with the core the holoenzyme is formed, which can initiate transcription. Mg(2+) is required as a cofactor. It depends on Zn(2+) as a cofactor.

It carries out the reaction RNA(n) + a ribonucleoside 5'-triphosphate = RNA(n+1) + diphosphate. Functionally, DNA-dependent RNA polymerase catalyzes the transcription of DNA into RNA using the four ribonucleoside triphosphates as substrates. This is DNA-directed RNA polymerase subunit beta' from Streptococcus pyogenes serotype M4 (strain MGAS10750).